We begin with the raw amino-acid sequence, 498 residues long: MSPYFKLSSALIFLAITMEALCSPIENTSTSNKDNDKETEHIEISAKPSGISRGALGQGFEIHREDLLSKQFEATGEKIFEDLPMDECTVTTTLGTIERDDSFYNSTESLYQSVASSTKISGSLKGAYTLGVSVAAVTNNIASSEEEVQGLSLNLKAYSMSSILKKNCVNTKPLSKDLVSDFEALDSEITKPWKLSSWKKYKVLLEKYGSHIVKESISGSSIYQYVFAKSNQKFNHRSFTVKACVSLAGPKNASKVGFAGCTGVSQQEIEQSSSQSMIKKLVVRGGKTETRASLIGELDPDQINKFLIEAETDPSPIQYKFEPIWTILKNRYVGTEHFAKAVNLEQFYKGFLHFGCSFLHTSNADNADVEIQKFDFAKTSDPDAPTYVCKVGPEGCQHHEDCHYRAAFWCECGGPYDLARTCLRYKTEKLNSGSTKRECYPNKESGFAWHGCQLHGLSCWCSAPNKNWEETWSGEDTNNALNDVHQVLMEKKRRDQAK.

The signal sequence occupies residues Met1–Cys22. Residues Ser23–Asn35 constitute a propeptide that is removed on maturation. One can recognise an MACPF domain in the interval Ser23–Leu359. The stretch at Ala135–Ser159 forms a coiled coil. Disulfide bonds link Cys389-Cys402, Cys396-Cys410, and Cys412-Cys422. The EGF-like domain occupies Cys410–Cys422.

Its subcellular location is the secreted. The protein localises to the nematocyst. In terms of biological role, is lethal to mice, and may cause hemolytic activity. The sequence is that of DELTA-thalatoxin-Avl2a from Actineria villosa (Okinawan sea anemone).